The following is a 105-amino-acid chain: MIASKFGIGQQVRHSLLGYLGVVVDIDPEYSLDEPSPDELAVNDELRAAPWYHVVMEDDDGQPVRTYLAEAQLRSEMRDEHPEQPSMDELARTIRKQLQAPRLRN.

Belongs to the HspQ family.

The protein resides in the cytoplasm. Functionally, involved in the degradation of certain denaturated proteins, including DnaA, during heat shock stress. The polypeptide is Heat shock protein HspQ (Salmonella choleraesuis (strain SC-B67)).